The sequence spans 102 residues: uncharacterized protein (102 aa).

3 helical membrane passes run 14-34 (IKNW…VISA), 35-55 (VAFT…LILI), and 76-96 (ILSI…HCYI).

It is found in the cell membrane. This is an uncharacterized protein from Methanocaldococcus jannaschii (strain ATCC 43067 / DSM 2661 / JAL-1 / JCM 10045 / NBRC 100440) (Methanococcus jannaschii).